The chain runs to 684 residues: Methionine--tRNA ligase (684 aa).

A 'HIGH' region motif is present at residues 17–27; the sequence is PYANGKAHVGH. Residues C148, C151, C160, and C164 each contribute to the Zn(2+) site. The 'KMSKS' region motif lies at 330 to 334; the sequence is TFSKS. K333 is a binding site for ATP. The 103-residue stretch at 582–684 folds into the tRNA-binding domain; that stretch reads DFSKLDIRIG…KETNPGTCIH (103 aa).

The protein belongs to the class-I aminoacyl-tRNA synthetase family. MetG type 1 subfamily. As to quaternary structure, homodimer. The cofactor is Zn(2+).

It is found in the cytoplasm. It carries out the reaction tRNA(Met) + L-methionine + ATP = L-methionyl-tRNA(Met) + AMP + diphosphate. Its function is as follows. Is required not only for elongation of protein synthesis but also for the initiation of all mRNA translation through initiator tRNA(fMet) aminoacylation. This is Methionine--tRNA ligase from Methanococcoides burtonii (strain DSM 6242 / NBRC 107633 / OCM 468 / ACE-M).